The sequence spans 149 residues: Acyl carrier protein 1, chloroplastic (149 aa).

A chloroplast-targeting transit peptide spans 1–59; it reads MAHCLAAVSSFSPSAVRRRLSSQVANVVSSRSSVSFHSRQMSFVSISSRPSSLRFKICC. Residues 69–144 form the Carrier domain; it reads KETVDKVCMI…DAANLIEKLV (76 aa). Serine 104 carries the O-(pantetheine 4'-phosphoryl)serine modification.

The protein belongs to the acyl carrier protein (ACP) family. Post-translationally, 4'-phosphopantetheine is transferred from CoA to a specific serine of apo-ACP by acpS. This modification is essential for activity because fatty acids are bound in thioester linkage to the sulfhydryl of the prosthetic group.

The protein localises to the plastid. It localises to the chloroplast. It functions in the pathway lipid metabolism; fatty acid biosynthesis. Functionally, carrier of the growing fatty acid chain in fatty acid biosynthesis. The sequence is that of Acyl carrier protein 1, chloroplastic (ACL1.1) from Hordeum vulgare (Barley).